The primary structure comprises 137 residues: Peptide methionine sulfoxide reductase MsrB (137 aa).

The region spanning 7-129 (VDDLKENLSE…NSASLSFTDE (123 aa)) is the MsrB domain. Residues cysteine 46, cysteine 49, cysteine 95, and cysteine 98 each coordinate Zn(2+). The active-site Nucleophile is cysteine 118.

This sequence belongs to the MsrB Met sulfoxide reductase family. It depends on Zn(2+) as a cofactor.

It catalyses the reaction L-methionyl-[protein] + [thioredoxin]-disulfide + H2O = L-methionyl-(R)-S-oxide-[protein] + [thioredoxin]-dithiol. The protein is Peptide methionine sulfoxide reductase MsrB of Escherichia fergusonii (strain ATCC 35469 / DSM 13698 / CCUG 18766 / IAM 14443 / JCM 21226 / LMG 7866 / NBRC 102419 / NCTC 12128 / CDC 0568-73).